The following is a 210-amino-acid chain: Small ribosomal subunit protein uS3 (210 aa).

One can recognise a KH type-2 domain in the interval 17 to 86 (IDEFLEKELR…NPQIEVEEIK (70 aa)).

Belongs to the universal ribosomal protein uS3 family. Part of the 30S ribosomal subunit.

Its function is as follows. Binds the lower part of the 30S subunit head. The sequence is that of Small ribosomal subunit protein uS3 from Pyrococcus furiosus (strain ATCC 43587 / DSM 3638 / JCM 8422 / Vc1).